Here is a 358-residue protein sequence, read N- to C-terminus: Holliday junction branch migration complex subunit RuvB (358 aa).

Positions 1–24 (MSIQTDDFAAPPPKRILSGAPASP) are disordered. Residues 5–194 (TDDFAAPPPK…FGIVARLEFY (190 aa)) form a large ATPase domain (RuvB-L) region. Residues L33, R34, G75, K78, T79, T80, 141–143 (EDY), R184, Y194, and R231 contribute to the ATP site. T79 serves as a coordination point for Mg(2+). A small ATPAse domain (RuvB-S) region spans residues 195–265 (SPEELASIVR…IAHRALVMLD (71 aa)). Positions 268-358 (PQGFDLMDRK…GDMFGAMRPE (91 aa)) are head domain (RuvB-H). Residues R304, R323, and R328 each coordinate DNA.

The protein belongs to the RuvB family. In terms of assembly, homohexamer. Forms an RuvA(8)-RuvB(12)-Holliday junction (HJ) complex. HJ DNA is sandwiched between 2 RuvA tetramers; dsDNA enters through RuvA and exits via RuvB. An RuvB hexamer assembles on each DNA strand where it exits the tetramer. Each RuvB hexamer is contacted by two RuvA subunits (via domain III) on 2 adjacent RuvB subunits; this complex drives branch migration. In the full resolvosome a probable DNA-RuvA(4)-RuvB(12)-RuvC(2) complex forms which resolves the HJ.

Its subcellular location is the cytoplasm. The enzyme catalyses ATP + H2O = ADP + phosphate + H(+). Functionally, the RuvA-RuvB-RuvC complex processes Holliday junction (HJ) DNA during genetic recombination and DNA repair, while the RuvA-RuvB complex plays an important role in the rescue of blocked DNA replication forks via replication fork reversal (RFR). RuvA specifically binds to HJ cruciform DNA, conferring on it an open structure. The RuvB hexamer acts as an ATP-dependent pump, pulling dsDNA into and through the RuvAB complex. RuvB forms 2 homohexamers on either side of HJ DNA bound by 1 or 2 RuvA tetramers; 4 subunits per hexamer contact DNA at a time. Coordinated motions by a converter formed by DNA-disengaged RuvB subunits stimulates ATP hydrolysis and nucleotide exchange. Immobilization of the converter enables RuvB to convert the ATP-contained energy into a lever motion, pulling 2 nucleotides of DNA out of the RuvA tetramer per ATP hydrolyzed, thus driving DNA branch migration. The RuvB motors rotate together with the DNA substrate, which together with the progressing nucleotide cycle form the mechanistic basis for DNA recombination by continuous HJ branch migration. Branch migration allows RuvC to scan DNA until it finds its consensus sequence, where it cleaves and resolves cruciform DNA. The protein is Holliday junction branch migration complex subunit RuvB of Albidiferax ferrireducens (strain ATCC BAA-621 / DSM 15236 / T118) (Rhodoferax ferrireducens).